The following is a 145-amino-acid chain: Acidic phospholipase A2 S1-11 (145 aa).

Positions Met-1 to Ala-19 are cleaved as a signal peptide. The propeptide occupies Ser-20 to Leu-27. Intrachain disulfides connect Cys-38/Cys-99, Cys-54/Cys-144, Cys-56/Cys-72, Cys-71/Cys-127, and Cys-106/Cys-118. Residues Tyr-55, Gly-57, and Gly-59 each coordinate Ca(2+). His-75 is a catalytic residue. Ca(2+) is bound at residue Asp-76. Residue Asp-121 is part of the active site.

This sequence belongs to the phospholipase A2 family. Group I subfamily. D49 sub-subfamily. Ca(2+) is required as a cofactor. This enzyme lacks two of the seven disulfide bonds found in similar PLA2 proteins. In terms of tissue distribution, expressed by the venom gland.

It localises to the secreted. The catalysed reaction is a 1,2-diacyl-sn-glycero-3-phosphocholine + H2O = a 1-acyl-sn-glycero-3-phosphocholine + a fatty acid + H(+). Its function is as follows. Snake venom phospholipase A2 (PLA2) that inhibits collagen-induced platelet aggregation. PLA2 catalyzes the calcium-dependent hydrolysis of the 2-acyl groups in 3-sn-phosphoglycerides. The chain is Acidic phospholipase A2 S1-11 from Austrelaps superbus (Lowland copperhead snake).